Here is a 90-residue protein sequence, read N- to C-terminus: Barrier-to-autointegration factor-like protein (90 aa).

As to quaternary structure, homodimer. Heterodimerizes with BANF1.

The protein localises to the nucleus. It localises to the cytoplasm. Functionally, may play a role in BANF1 regulation and influence tissue-specific roles of BANF1. The polypeptide is Barrier-to-autointegration factor-like protein (Banf2) (Mus musculus (Mouse)).